The following is a 308-amino-acid chain: MADHTEVDLDSIIDRLLEVRGSRPGKQVQLLEAEIRYLCTKAREIFISQPILLELEAPIKICGDIHGQYYDLLRLFEYGGFPPEANYLFLGDYVDRGKQSLETICLLLAYKIKYPENFFILRGNHECASINRIYGFYDECKRRYNIKLWKTFTDCFNCLPIAAIIDEKIFTMHGGLSPDLNSMEQIRRVMRPTDIPDCGLLCDLLWSDPDKDITGWSENDRGVSFTFGPDVVSRFLQKHDMDLICRAHQVVEDGYEFFSKRQLVTLFSAPNYCGEFDNAGAMMSVDESLLCSFQILKPAEKKQKFGRR.

The Mn(2+) site is built by Asp64, His66, Asp92, and Asn124. The active-site Proton donor is His125. The Mn(2+) site is built by His173 and His248.

Belongs to the PPP phosphatase family. PP-1 subfamily. Mn(2+) serves as cofactor.

It is found in the cytoplasm. The enzyme catalyses O-phospho-L-seryl-[protein] + H2O = L-seryl-[protein] + phosphate. It catalyses the reaction O-phospho-L-threonyl-[protein] + H2O = L-threonyl-[protein] + phosphate. The sequence is that of Serine/threonine-protein phosphatase PP1 (pph-3) from Neurospora crassa (strain ATCC 24698 / 74-OR23-1A / CBS 708.71 / DSM 1257 / FGSC 987).